The primary structure comprises 499 residues: Aspartyl/glutamyl-tRNA(Asn/Gln) amidotransferase subunit B (499 aa).

Belongs to the GatB/GatE family. GatB subfamily. As to quaternary structure, heterotrimer of A, B and C subunits.

It carries out the reaction L-glutamyl-tRNA(Gln) + L-glutamine + ATP + H2O = L-glutaminyl-tRNA(Gln) + L-glutamate + ADP + phosphate + H(+). The enzyme catalyses L-aspartyl-tRNA(Asn) + L-glutamine + ATP + H2O = L-asparaginyl-tRNA(Asn) + L-glutamate + ADP + phosphate + 2 H(+). Allows the formation of correctly charged Asn-tRNA(Asn) or Gln-tRNA(Gln) through the transamidation of misacylated Asp-tRNA(Asn) or Glu-tRNA(Gln) in organisms which lack either or both of asparaginyl-tRNA or glutaminyl-tRNA synthetases. The reaction takes place in the presence of glutamine and ATP through an activated phospho-Asp-tRNA(Asn) or phospho-Glu-tRNA(Gln). The polypeptide is Aspartyl/glutamyl-tRNA(Asn/Gln) amidotransferase subunit B (Bartonella bacilliformis (strain ATCC 35685 / KC583 / Herrer 020/F12,63)).